Here is a 355-residue protein sequence, read N- to C-terminus: Probable F-box protein At5g36000 (355 aa).

A compositionally biased stretch (basic and acidic residues) spans 1–14 (MNTRSGDAEGDIRG). Positions 1–44 (MNTRSGDAEGDIRGKMIAPVRDGNGGQKRKLVQSNDIQRDEDGG) are disordered. Residues 78-124 (QSRFSWYEQDIWTYITRFLDGKSLVKLGATNKWFYKIAMEDTVWRFA) enclose the F-box; degenerate domain.

This chain is Probable F-box protein At5g36000, found in Arabidopsis thaliana (Mouse-ear cress).